A 99-amino-acid chain; its full sequence is Class II hydrophobin 1 (99 aa).

The N-terminal stretch at 1–26 (MKFIAVVAALTASLAMAAPTESSTDT) is a signal peptide. 4 disulfides stabilise this stretch: cysteine 31–cysteine 80, cysteine 41–cysteine 71, cysteine 42–cysteine 54, and cysteine 81–cysteine 92.

This sequence belongs to the cerato-ulmin hydrophobin family. As to quaternary structure, homotetramer. Further self-assembles to form highly ordered films at water-air interfaces through intermolecular interactions.

It is found in the secreted. The protein localises to the cell wall. Aerial growth, conidiation, and dispersal of filamentous fungi in the environment rely upon a capability of their secreting small amphipathic proteins called hydrophobins (HPBs) with low sequence identity. Class I can self-assemble into an outermost layer of rodlet bundles on aerial cell surfaces, conferring cellular hydrophobicity that supports fungal growth, development and dispersal; whereas Class II form highly ordered films at water-air interfaces through intermolecular interactions but contribute nothing to the rodlet structure. HFB1 is a class II hydrophobin that shows antifungal activity against pathogenic and opportunistic fungi such as Cryptococcus neoformans, Nakaseomyces glabrataa, or Candida tropicalis. This Sodiomyces alkalinus (strain CBS 110278 / VKM F-3762 / F11) (Alkaliphilic filamentous fungus) protein is Class II hydrophobin 1.